The sequence spans 197 residues: Small ribosomal subunit protein uS4 (197 aa).

An S4 RNA-binding domain is found at 94 to 158; that stretch reads RRLDNVIYRF…LKKYLYDYKN (65 aa).

This sequence belongs to the universal ribosomal protein uS4 family. In terms of assembly, part of the 30S ribosomal subunit. Contacts protein S5. The interaction surface between S4 and S5 is involved in control of translational fidelity.

Its function is as follows. One of the primary rRNA binding proteins, it binds directly to 16S rRNA where it nucleates assembly of the body of the 30S subunit. With S5 and S12 plays an important role in translational accuracy. The sequence is that of Small ribosomal subunit protein uS4 (rpsD) from Carsonella ruddii (strain PV).